A 219-amino-acid chain; its full sequence is Proteasome subunit beta (219 aa).

Positions 1 to 14 (MISNSEYHKEYMKG) are cleaved as a propeptide — removed in mature form; by autocatalysis. The Nucleophile role is filled by T15.

Belongs to the peptidase T1B family. The 20S proteasome core is composed of 14 alpha and 14 beta subunits that assemble into four stacked heptameric rings, resulting in a barrel-shaped structure. The two inner rings, each composed of seven catalytic beta subunits, are sandwiched by two outer rings, each composed of seven alpha subunits. The catalytic chamber with the active sites is on the inside of the barrel. Has a gated structure, the ends of the cylinder being occluded by the N-termini of the alpha-subunits. Is capped at one or both ends by the proteasome regulatory ATPase, PAN.

It localises to the cytoplasm. It catalyses the reaction Cleavage of peptide bonds with very broad specificity.. The formation of the proteasomal ATPase PAN-20S proteasome complex, via the docking of the C-termini of PAN into the intersubunit pockets in the alpha-rings, triggers opening of the gate for substrate entry. Interconversion between the open-gate and close-gate conformations leads to a dynamic regulation of the 20S proteasome proteolysis activity. Its function is as follows. Component of the proteasome core, a large protease complex with broad specificity involved in protein degradation. In Methanococcus maripaludis (strain C5 / ATCC BAA-1333), this protein is Proteasome subunit beta.